The following is a 162-amino-acid chain: Caveolin-2 (162 aa).

Residues 1 to 86 are Cytoplasmic-facing; it reads MGLETEKADV…FEISKYVMYK (86 aa). Tyrosine 19 bears the Phosphotyrosine; by SRC mark. Serine 20 and serine 23 each carry phosphoserine. Position 27 is a phosphotyrosine; by SRC (tyrosine 27). Residue serine 36 is modified to Phosphoserine. The segment at residues 87-107 is an intramembrane region (helical); it reads FLTVFLAIPLAFIAGILFATL. At 108 to 162 the chain is on the cytoplasmic side; it reads SCLHIWILMPFVKTCLMVLPSVQTIWKSVTDVFIAPLCTSIGRSFSSVSLQLSQD.

This sequence belongs to the caveolin family. Monomer or homodimer. Interacts with CAV1; the interaction forms a stable heterooligomeric complex that is required for targeting to lipid rafts and for caveolae formation. Tyrosine phosphorylated forms do not form heterooligomers with the Tyr-19-phosphorylated form existing as a monomer or dimer, and the Tyr-27-form as a monomer only. Interacts (tyrosine phosphorylated form) with the SH2 domain-containing proteins, RASA1, NCK1 and SRC. Interacts (tyrosine phosphorylated form) with INSR, the interaction (Tyr-27-phosphorylated form) is increased on insulin stimulation. Interacts (Tyr-19 phosphorylated form) with MAPK1 (phosphorylated form); the interaction, promoted by insulin, leads to nuclear location and MAPK1 activation. Interacts with STAT3; the interaction is increased on insulin-induced tyrosine phosphorylation leading to STAT activation. In terms of processing, phosphorylated on serine and tyrosine residues. CAV1 promotes phosphorylation on Ser-23 which then targets the complex to the plasma membrane, lipid rafts and caveolae. Phosphorylation on Ser-36 appears to modulate mitosis in endothelial cells. Phosphorylation on both Tyr-19 and Tyr-27 is required for insulin-induced 'Ser-727' phosphorylation of STAT3 and its activation. Phosphorylation on Tyr-19 is required for insulin-induced phosphorylation of MAPK1 and DNA binding of STAT3. Tyrosine phosphorylation is induced by both EGF and insulin (By. similarity).

The protein resides in the nucleus. It localises to the cytoplasm. The protein localises to the golgi apparatus membrane. It is found in the cell membrane. Its subcellular location is the membrane. The protein resides in the caveola. Functionally, may act as a scaffolding protein within caveolar membranes. Interacts directly with G-protein alpha subunits and can functionally regulate their activity. Acts as an accessory protein in conjunction with CAV1 in targeting to lipid rafts and driving caveolae formation. The Ser-36 phosphorylated form has a role in modulating mitosis in endothelial cells. Positive regulator of cellular mitogenesis of the MAPK signaling pathway. Required for the insulin-stimulated nuclear translocation and activation of MAPK1 and STAT3, and the subsequent regulation of cell cycle progression. The sequence is that of Caveolin-2 (CAV2) from Papio anubis (Olive baboon).